Here is a 172-residue protein sequence, read N- to C-terminus: Large ribosomal subunit protein uL10 (172 aa).

The protein belongs to the universal ribosomal protein uL10 family. Part of the ribosomal stalk of the 50S ribosomal subunit. The N-terminus interacts with L11 and the large rRNA to form the base of the stalk. The C-terminus forms an elongated spine to which L12 dimers bind in a sequential fashion forming a multimeric L10(L12)X complex.

Functionally, forms part of the ribosomal stalk, playing a central role in the interaction of the ribosome with GTP-bound translation factors. The protein is Large ribosomal subunit protein uL10 (rplJ) of Caulobacter vibrioides (strain ATCC 19089 / CIP 103742 / CB 15) (Caulobacter crescentus).